The chain runs to 93 residues: Small ribosomal subunit protein bS6 (93 aa).

Belongs to the bacterial ribosomal protein bS6 family.

Binds together with bS18 to 16S ribosomal RNA. This is Small ribosomal subunit protein bS6 from Phytoplasma australiense.